The sequence spans 664 residues: E3 ubiquitin-protein ligase RNF139 (664 aa).

N-acetylalanine is present on Ala2. 12 helical membrane passes run 51 to 71 (IVLQIFLRLFGVFASSIVLIL), 85 to 105 (AFLLAATSVLVNYYASLHIDF), 125 to 145 (SLWMALIVLQLTFGIGYVTLL), 154 to 174 (LIILDLLVPVIGLITELPLHI), 178 to 198 (LLFTSSLILTLNTVFVLAVKL), 293 to 313 (GMSAVISSVAHYLGLGILAFI), 323 to 343 (LGFVAPVLFFILALQTGLSGL), 356 to 376 (MCLLLTAVLHFIHGMTDPVLM), 390 to 410 (FPVLFVSACLFILPVLLSYVL), 420 to 440 (LFAVTAFCVELCLKVIVSLTV), 469 to 489 (SIIEFIFGVVMFGNGAYTMMF), and 495 to 512 (IRAFMMCLHAYFNIYLQA). The RING-type; atypical zinc-finger motif lies at 547–586 (CAICYHEFTTSARITPCNHYFHALCLRKWLYIQDTCPMCH). The segment at 601-664 (VSNNNGFIPP…AAEEFNDDTD (64 aa)) is disordered. The span at 616-628 (EAVREAAAESDRE) shows a compositional bias: basic and acidic residues. The segment covering 629 to 639 (LNEDDSTDCDD) has biased composition (acidic residues). A Phosphoserine modification is found at Ser634. Phosphothreonine is present on residues Thr635 and Thr663.

As to quaternary structure, interacts with MHC class I and HM13. Interacts with VHL. Component of SCAP-SREBP complex composed of SREBF2, SCAP and RNF139; the complex hampers the interaction between SCAP and SEC24B, thereby reducing SREBF2 proteolytic processing. Interacts with SREBF2 (via C-terminal domain). Interacts with SCAP; the interaction inhibits the interaction of SCAP with SEC24B and hampering the ER to Golgi transport of the SCAP-SREBP complex. Interacts with SEC24B. Interacts with INSIG1 and INSIG2. Interacts with EIF3F and EIF3H; the interaction leads to protein translation inhibitions in a ubiquitination-dependent manner. Interacts with XBP1 isoform 1; the interaction induces ubiquitination and degradation of XBP1 isoform 1. Interacts with AUP1, AMFR and UBE2G2; interaction with AUP1 facilitates interaction of RNF139 with ubiquitin-conjugating enzyme UBE2G2 and ubiquitin ligase AMFR/gp78, leading to sterol-induced ubiquitination of HMGCR and its subsequent proteasomal degradation. In terms of processing, autoubiquitinated. Ubiquitination is induced by sterol and leads to ist degradation via the ubiquitin-proteasome pathway. Highly expressed in testis, placenta and adrenal gland. Moderate expression in heart, brain, liver, skeletal muscle and pancreas, and low expression in lung and kidney.

It localises to the endoplasmic reticulum membrane. The enzyme catalyses S-ubiquitinyl-[E2 ubiquitin-conjugating enzyme]-L-cysteine + [acceptor protein]-L-lysine = [E2 ubiquitin-conjugating enzyme]-L-cysteine + N(6)-ubiquitinyl-[acceptor protein]-L-lysine.. The protein operates within protein modification; protein ubiquitination. E3-ubiquitin ligase; acts as a negative regulator of cell proliferation through mechanisms involving G2/M arrest and cell death. Required for MHC class I ubiquitination in cells expressing the cytomegalovirus protein US2 before dislocation from the endoplasmic reticulum (ER). Affects SREBP processing by hindering the SREBP-SCAP complex translocation from the ER to the Golgi, thereby reducing SREBF2 target gene expression. Involved in the sterol-accelerated degradation of HMGCR. This is achieved through binding of RNF139 to INSIG1 and/or INSIG2 at the ER membrane. In addition, interaction of RNF139 with AUP1 facilitates interaction of RNF139 with ubiquitin-conjugating enzyme UBE2G2 and ubiquitin ligase AMFR, leading to ubiquitination of HMGCR. The ubiquitinated HMGCR is then released from the ER into the cytosol for subsequent destruction. Required for INSIG1 ubiquitination. May be required for EIF3 complex ubiquitination. This is E3 ubiquitin-protein ligase RNF139 from Homo sapiens (Human).